The following is a 141-amino-acid chain: Acetyltransferase YPN_1354 (141 aa).

The region spanning 1–141 is the N-acetyltransferase domain; that stretch reads MEIRIFQQDD…GKRLIVDQEY (141 aa).

It belongs to the acetyltransferase family. YpeA subfamily.

This Yersinia pestis bv. Antiqua (strain Nepal516) protein is Acetyltransferase YPN_1354.